We begin with the raw amino-acid sequence, 300 residues long: Mitochondrial tricarboxylate transporter 1 (300 aa).

Solcar repeat units follow at residues Val8 to Met98, Leu107 to Trp197, and Ile209 to Leu294. The next 6 helical transmembrane spans lie at Ser11–Ile31, Pro67–Val87, Leu114–Ile134, Gly172–Tyr191, Leu208–Gly228, and Leu277–Gly297.

The protein belongs to the mitochondrial carrier (TC 2.A.29) family.

The protein resides in the mitochondrion membrane. Its function is as follows. Mitochondrial tricarboxylate transporter; part of the gene cluster that mediates the biosynthesis of itaconic acid and 2-hydroxyparaconate. Cis-aconitate is secreted by the mitochondrial tricarboxylate transporter MTT1. In the cytosol cis-aconitate is converted into trans-aconitate via isomerization by the aconitate-delta-isomerase ADI1. Decarboxylation of trans-aconitate by the trans-aconitate decarboxylase TAD1 then leads then to the production of itaconic acid. The cytochrome P450 monooxygenase CYP3 further converts itaconate to 2-hydroxyparaconate via oxidation of the double bond, leading to a transient epoxide, which can subsequently be lactonized to produce 2-hydroxyparaconate. Secretion of itaconate and possibly 2-hydroxyparaconate into the medium is mediated by the major facilitator ITP1. The glyoxalase domain-containing protein RDO1 is not involved in the biosynthesis of itaconate and 2-hydroxyparaconate, however, it might play a role in the further conversion of 2-hydroxyparaconate to itatartarate. This is Mitochondrial tricarboxylate transporter 1 from Mycosarcoma maydis (Corn smut fungus).